The chain runs to 497 residues: Apolipoprotein N-acyltransferase (497 aa).

6 helical membrane passes run 21-41 (FAPFYLYPIPVVTLALLALLW), 51-71 (ALTGFTFGMGLFGAGVTWLYV), 85-105 (VLALIILCAYLALFPALTGWI), 119-139 (GMVAALWALAEWLRGTLFTGF), 157-177 (FAPVIGVYGLSLLLMLSAAWL), and 189-209 (FWLGLGSVWLIGFGLQQIHWT). The CN hydrolase domain occupies 221–461 (LQGNIPQNMK…GLHSTAQGFG (241 aa)). Residue glutamate 259 is the Proton acceptor of the active site. Lysine 319 is an active-site residue. Cysteine 371 (nucleophile) is an active-site residue. The chain crosses the membrane as a helical span at residues 472-492 (SLVFALIGLLLLAGSLAAFSG).

Belongs to the CN hydrolase family. Apolipoprotein N-acyltransferase subfamily.

It is found in the cell inner membrane. The enzyme catalyses N-terminal S-1,2-diacyl-sn-glyceryl-L-cysteinyl-[lipoprotein] + a glycerophospholipid = N-acyl-S-1,2-diacyl-sn-glyceryl-L-cysteinyl-[lipoprotein] + a 2-acyl-sn-glycero-3-phospholipid + H(+). It participates in protein modification; lipoprotein biosynthesis (N-acyl transfer). Its function is as follows. Catalyzes the phospholipid dependent N-acylation of the N-terminal cysteine of apolipoprotein, the last step in lipoprotein maturation. This chain is Apolipoprotein N-acyltransferase, found in Nitrosomonas europaea (strain ATCC 19718 / CIP 103999 / KCTC 2705 / NBRC 14298).